A 169-amino-acid polypeptide reads, in one-letter code: S-ribosylhomocysteine lyase (169 aa).

Fe cation is bound by residues His-54, His-58, and Cys-128.

It belongs to the LuxS family. As to quaternary structure, homodimer. It depends on Fe cation as a cofactor.

The enzyme catalyses S-(5-deoxy-D-ribos-5-yl)-L-homocysteine = (S)-4,5-dihydroxypentane-2,3-dione + L-homocysteine. Functionally, involved in the synthesis of autoinducer 2 (AI-2) which is secreted by bacteria and is used to communicate both the cell density and the metabolic potential of the environment. The regulation of gene expression in response to changes in cell density is called quorum sensing. Catalyzes the transformation of S-ribosylhomocysteine (RHC) to homocysteine (HC) and 4,5-dihydroxy-2,3-pentadione (DPD). The chain is S-ribosylhomocysteine lyase from Shewanella sp. (strain MR-4).